The sequence spans 989 residues: AP-2 complex subunit alpha-2 (989 aa).

4 HEAT repeats span residues 112–149 (EMLPLIINSFKEDLLARSDYFQSLALAAICNIGGKEVA), 188–225 (VTPDSWVERLVSVLDEPDFGVLTSLMSLLIELASENPI), 368–402 (IMIKKYQDTVLLSLKDSDISIRRRALDLLYGMCDK), and 403–440 (NTCKHIVAELLSYLQTADYAIREELVIKIANLAEKFAS). The tract at residues 610 to 745 (DNSNTTSNTA…SSSPISSGGS (136 aa)) is disordered. The span at 611 to 623 (NSNTTSNTANNSN) shows a compositional bias: low complexity. The span at 624–638 (MINSQDSKISSGGFN) shows a compositional bias: polar residues. The span at 639 to 703 (QSPQPSQQQQ…QPVYQQQQQA (65 aa)) shows a compositional bias: low complexity. The segment covering 704 to 714 (ESFSPVQSDTV) has biased composition (polar residues). Over residues 715 to 745 (SSFGQQQQQQQGGFSSPTIQASSSPISSGGS) the composition is skewed to low complexity.

It belongs to the adaptor complexes large subunit family. Adaptor protein complex 2 (AP-2) is a heterotetramer composed of two large adaptins (alpha-type and beta-type subunits), a medium adaptin (mu-type subunit AP50) and a small adaptin (sigma-type subunit AP17).

Its subcellular location is the cell membrane. It localises to the membrane. The protein resides in the coated pit. Component of the adaptor complexes which link clathrin to receptors in coated vesicles. Clathrin-associated protein complexes are believed to interact with the cytoplasmic tails of membrane proteins, leading to their selection and concentration. This chain is AP-2 complex subunit alpha-2 (ap2a1-1), found in Dictyostelium discoideum (Social amoeba).